Here is a 90-residue protein sequence, read N- to C-terminus: Probable Fe(2+)-trafficking protein (90 aa).

The protein belongs to the Fe(2+)-trafficking protein family.

Could be a mediator in iron transactions between iron acquisition and iron-requiring processes, such as synthesis and/or repair of Fe-S clusters in biosynthetic enzymes. The polypeptide is Probable Fe(2+)-trafficking protein (Marinobacter nauticus (strain ATCC 700491 / DSM 11845 / VT8) (Marinobacter aquaeolei)).